The primary structure comprises 119 residues: gSG7 salivary protein (119 aa).

Disulfide bonds link Cys-58/Cys-113 and Cys-81/Cys-91.

It is found in the secreted. Its activity is regulated as follows. The activity is increased in the presence of host properdin (CFP). Functionally, salivary protein that inhibits the alternative pathway of complement system activation in the host while having no inhibitory effect on the classical pathway. Inhibits activity of activated host C3-convertase complex C3bBb (C3-CFB). Enhances accumulation of C3bBb on immobilized properdin. The protein is gSG7 salivary protein of Anopheles freeborni (Western malaria mosquito).